Here is a 116-residue protein sequence, read N- to C-terminus: Orphan antitoxin YagB (116 aa).

The protein belongs to the CbeA/YafW/YfjZ antitoxin family.

Its function is as follows. Putative antitoxin component of a type IV toxin-antitoxin (TA) system; its cognate toxin is unknown. In Escherichia coli (strain K12), this protein is Orphan antitoxin YagB (yagB).